The primary structure comprises 1073 residues: TSC22 domain family protein 1 (1073 aa).

The required for interaction with TGFBR1 and promotion of TGF-beta signaling stretch occupies residues 1 to 98 (MHQPPESTAA…SQAQLQAQPL (98 aa)). Disordered stretches follow at residues 22–110 (MAHP…KKSG), 125–205 (ISSN…PHLP), 220–288 (LHHH…SPAS), 458–486 (VTSE…SVGS), 607–628 (YSQA…QQLQ), and 742–766 (VQQP…QVVP). The segment covering 36–45 (GSASALNAAG) has biased composition (low complexity). The span at 58-70 (FPPPSLLQPPPPA) shows a compositional bias: pro residues. The segment covering 84–100 (SLNLLSQAQLQAQPLAP) has biased composition (low complexity). Residues 133-142 (EDTESYDDLD) are compositionally biased toward acidic residues. Residues 220–240 (LHHHHQIHHGHHLQHGHHHPS) are compositionally biased toward basic residues. Residues 257–271 (PVSRKLSTTGSSDSI) show a composition bias toward polar residues. Residue serine 263 is modified to Phosphoserine. Low complexity-rich tracts occupy residues 272–288 (TPVA…SPAS) and 465–483 (TSGS…YTES). Over residues 614 to 625 (VQTPLPGAPPPQ) the composition is skewed to pro residues. Positions 742–764 (VQQPSTQVPPSVIQQGAPPSSQV) are enriched in polar residues. Residues 1006 to 1027 (LKEQIKELIEKNSQLEQENNLL) are leucine-zipper. The interval 1037-1073 (AQFQAQLQTGSPPATTQPQGTTQPPAQPASQGSGPTA) is disordered. The span at 1044-1073 (QTGSPPATTQPQGTTQPPAQPASQGSGPTA) shows a compositional bias: low complexity.

Belongs to the TSC-22/Dip/Bun family. Forms homodimers. Forms heterodimers. Component of a complex composed of TSC22D1 (via N-terminus), TGFBR1 and TGFBR2; the interaction between TSC22D1 and TGFBR1 is inhibited by SMAD7 and promoted by TGFB1. Interacts with SMAD7; the interaction requires TGF-beta and the interaction is inhibited by TGFBR1. Interacts with TPT1/fortilin; interaction results in the destabilization of TSC22D1 protein and prevents TSC22D1-mediated apoptosis. Interacts with SMAD4 (via N-terminus). Interacts with ACVRL1/ALK1, ACVR1/ALK2, BMPR1A/ALK3, ACVR1B/ALK4, BMPR1B/ALK6, ACVR2A/ACTRII, and BMPR2. Interacts with SMAD6. Interacts with TFE3; the interaction is enhanced in the presence of TGF-beta. In terms of assembly, forms a heterodimer with TSC22D4/THG1. As to quaternary structure, forms a heterodimer with TSC22D4/THG1. Interacts with histone H1-2. Interacts with GNL3. Interacts with histone H1-2. Ubiquitously expressed in adult tissues. Expressed in the postmitotic epithelial compartment at the top of intestinal mucosal villi.

Its subcellular location is the cytoplasm. The protein resides in the nucleus. The protein localises to the cell membrane. It is found in the mitochondrion. Functionally, transcriptional repressor. Acts on the C-type natriuretic peptide (CNP) promoter. Acts to promote CASP3-mediated apoptosis. Positively regulates TGF-beta signaling by interacting with SMAD7 which inhibits binding of SMAD7 to TGFBR1, preventing recruitment of SMURF ubiquitin ligases to TGFBR1 and inhibiting SMURF-mediated ubiquitination and degradation of TGFBR1. Contributes to enhancement of TGF-beta signaling by binding to and modulating the transcription activator activity of SMAD4. Promotes TGF-beta-induced transcription of COL1A2; via its interaction with TFE3 at E-boxes in the gene proximal promoter. Plays a role in the repression of hematopoietic precursor cell growth. Promotes IL2 deprivation-induced apoptosis in T-lymphocytes, via repression of TSC22D3/GILZ transcription and activation of the caspase cascade. In terms of biological role, may act to negatively regulate TGFB3 signaling and thereby inhibit cell death in mammary gland cells. Positively regulates cell death in response to TGFB3 during mammary gland involution. In Homo sapiens (Human), this protein is TSC22 domain family protein 1.